The sequence spans 91 residues: Essential MCU regulator, mitochondrial (91 aa).

A helical membrane pass occupies residues 45–65 (VIPFGLLGVVLTVIPGLLIGA).

It belongs to the SMDT1/EMRE family.

It localises to the mitochondrion inner membrane. In terms of biological role, essential regulatory subunit of the mitochondrial calcium uniporter (mcu) channel, a protein that mediates calcium uptake into mitochondria. The sequence is that of Essential MCU regulator, mitochondrial from Aedes aegypti (Yellowfever mosquito).